A 359-amino-acid polypeptide reads, in one-letter code: 3-dehydroquinate synthase (359 aa).

NAD(+)-binding positions include 106–110 (GVVGD), 130–131 (TS), Lys143, and Lys152. Glu185, His246, and His263 together coordinate Zn(2+).

Belongs to the sugar phosphate cyclases superfamily. Dehydroquinate synthase family. Co(2+) is required as a cofactor. Zn(2+) serves as cofactor. The cofactor is NAD(+).

It localises to the cytoplasm. The catalysed reaction is 7-phospho-2-dehydro-3-deoxy-D-arabino-heptonate = 3-dehydroquinate + phosphate. The protein operates within metabolic intermediate biosynthesis; chorismate biosynthesis; chorismate from D-erythrose 4-phosphate and phosphoenolpyruvate: step 2/7. In terms of biological role, catalyzes the conversion of 3-deoxy-D-arabino-heptulosonate 7-phosphate (DAHP) to dehydroquinate (DHQ). The chain is 3-dehydroquinate synthase from Clostridium kluyveri (strain ATCC 8527 / DSM 555 / NBRC 12016 / NCIMB 10680 / K1).